The following is a 376-amino-acid chain: Riboflavin biosynthesis protein RibD (376 aa).

Positions 1–157 are deaminase; that stretch reads MCFPLPSNSF…PIFFHYIQTK (157 aa). The region spanning 13–135 is the CMP/dCMP-type deaminase domain; the sequence is MTDLDYMRRA…QLRQAGVEVV (123 aa). Zn(2+) is bound at residue H62. The active-site Proton donor is the E64. Zn(2+)-binding residues include C87 and C96. Residues 158–376 are reductase; sequence RPYVLMKYAM…LLDYVVISPL (219 aa). An NADP(+)-binding site is contributed by A166. S180 contributes to the substrate binding site. W182 is an NADP(+) binding site. R196 serves as a coordination point for substrate. Residues T208 and D212 each contribute to the NADP(+) site. Substrate is bound by residues L216 and R219. S233 serves as a coordination point for NADP(+). E304 contributes to the substrate binding site. 306 to 312 provides a ligand contact to NADP(+); sequence GSSLNFS.

This sequence in the N-terminal section; belongs to the cytidine and deoxycytidylate deaminase family. In the C-terminal section; belongs to the HTP reductase family. Requires Zn(2+) as cofactor.

The catalysed reaction is 2,5-diamino-6-hydroxy-4-(5-phosphoribosylamino)-pyrimidine + H2O + H(+) = 5-amino-6-(5-phospho-D-ribosylamino)uracil + NH4(+). It catalyses the reaction 5-amino-6-(5-phospho-D-ribitylamino)uracil + NADP(+) = 5-amino-6-(5-phospho-D-ribosylamino)uracil + NADPH + H(+). The protein operates within cofactor biosynthesis; riboflavin biosynthesis; 5-amino-6-(D-ribitylamino)uracil from GTP: step 2/4. Its pathway is cofactor biosynthesis; riboflavin biosynthesis; 5-amino-6-(D-ribitylamino)uracil from GTP: step 3/4. Functionally, converts 2,5-diamino-6-(ribosylamino)-4(3h)-pyrimidinone 5'-phosphate into 5-amino-6-(ribosylamino)-2,4(1h,3h)-pyrimidinedione 5'-phosphate. The sequence is that of Riboflavin biosynthesis protein RibD (ribD) from Actinobacillus pleuropneumoniae (Haemophilus pleuropneumoniae).